The primary structure comprises 191 residues: Adenylate kinase (191 aa).

Residue 9 to 17 (GVPGVGATT) coordinates ATP.

Belongs to the archaeal adenylate kinase family.

It localises to the cytoplasm. It catalyses the reaction AMP + ATP = 2 ADP. The sequence is that of Adenylate kinase from Methanopyrus kandleri (strain AV19 / DSM 6324 / JCM 9639 / NBRC 100938).